The following is a 327-amino-acid chain: DNA-directed RNA polymerase subunit alpha (327 aa).

Positions Met-1–Glu-233 are alpha N-terminal domain (alpha-NTD). The tract at residues Glu-266–Lys-327 is alpha C-terminal domain (alpha-CTD).

It belongs to the RNA polymerase alpha chain family. In terms of assembly, in plastids the minimal PEP RNA polymerase catalytic core is composed of four subunits: alpha, beta, beta', and beta''. When a (nuclear-encoded) sigma factor is associated with the core the holoenzyme is formed, which can initiate transcription.

It is found in the plastid. The protein resides in the chloroplast. The catalysed reaction is RNA(n) + a ribonucleoside 5'-triphosphate = RNA(n+1) + diphosphate. Functionally, DNA-dependent RNA polymerase catalyzes the transcription of DNA into RNA using the four ribonucleoside triphosphates as substrates. The protein is DNA-directed RNA polymerase subunit alpha of Barbarea verna (Land cress).